Consider the following 237-residue polypeptide: Large ribosomal subunit protein uL3 (237 aa).

Disordered regions lie at residues 133–155 and 213–237; these read ASHGNSITHRSHGSTGQRQDPGK and PENAPKPAGLRAGAKAEAAATEGAE. Positions 135–150 are enriched in polar residues; that stretch reads HGNSITHRSHGSTGQR. Q151 carries the post-translational modification N5-methylglutamine. The span at 220-237 shows a compositional bias: low complexity; the sequence is AGLRAGAKAEAAATEGAE.

The protein belongs to the universal ribosomal protein uL3 family. Part of the 50S ribosomal subunit. Forms a cluster with proteins L14 and L19. Post-translationally, methylated by PrmB.

Functionally, one of the primary rRNA binding proteins, it binds directly near the 3'-end of the 23S rRNA, where it nucleates assembly of the 50S subunit. This Brucella canis (strain ATCC 23365 / NCTC 10854 / RM-666) protein is Large ribosomal subunit protein uL3.